The sequence spans 214 residues: MTITEEDLIEPLRKVVEYSPPRRFLETVDMIVNVKGVDLSDPSQRIDKEVVLPHGRGKPVNVCVIAEGEMAREAEEAGATVINREKLEELAENVREAKKIARRHEFFYAQVDLMPDVGRVLGPVLGPRGKMAKPVPPNADIRALIERAHRTARVRMRDQPVIHTVIGARNMEPEQLAENAMAVLREITSELEKSWAQIDSVYVKTTMGPAERVY.

This sequence belongs to the universal ribosomal protein uL1 family. Part of the 50S ribosomal subunit.

Binds directly to 23S rRNA. Probably involved in E site tRNA release. Functionally, protein L1 is also a translational repressor protein, it controls the translation of its operon by binding to its mRNA. This is Large ribosomal subunit protein uL1 from Methanopyrus kandleri (strain AV19 / DSM 6324 / JCM 9639 / NBRC 100938).